Reading from the N-terminus, the 389-residue chain is Endo-chitosanase C (389 aa).

The signal sequence occupies residues 1–22 (MPIKSFASRLALSLAICGTAMG). One copy of the R3-1 repeat lies at 280 to 313 (CSWPGHCAGFKNKGATCSSNDDCSDDLACQNGKC). An R3-2 repeat occupies 320–350 (ETCSWEGHCKGATCSSNDDCSDELACISGIC). The stretch at 357–387 (ETCEWEGHCEGASCSSHDDCDGNLACKNGKC) is one R3-3 repeat.

This sequence belongs to the glycosyl hydrolase 75 family.

It localises to the secreted. The enzyme catalyses Endohydrolysis of beta-(1-&gt;4)-linkages between D-glucosamine residues in a partly acetylated chitosan.. Functionally, chitosanase catalyzing the endo-type cleavage of chitosan, the deacylated form of chitin. Chitosanase may be crucial in the degradation of the deacetylated portion of chitin in the fungal cell wall. Chitoolisaccharides produced by the hydrolysis of partially N-acetylated chitosan are known to have many biological activities, including antibacterial activity, immune-enhancing effects, and elicitor activity. This is Endo-chitosanase C (csnC) from Aspergillus oryzae (strain ATCC 42149 / RIB 40) (Yellow koji mold).